We begin with the raw amino-acid sequence, 66 residues long: Beta-toxin Cll1m (66 aa).

In terms of domain architecture, LCN-type CS-alpha/beta spans 1 to 66; the sequence is KEGYIVNLST…VWPLPKKTCT (66 aa). 4 disulfide bridges follow: C12–C65, C16–C41, C25–C46, and C29–C48. Residue T66 is modified to Threonine amide.

The protein belongs to the long (4 C-C) scorpion toxin superfamily. Sodium channel inhibitor family. Beta subfamily. Expressed by the venom gland.

It localises to the secreted. Its function is as follows. Beta toxins bind voltage-independently at site-4 of sodium channels (Nav) and shift the voltage of activation toward more negative potentials thereby affecting sodium channel activation and promoting spontaneous and repetitive firing. This Centruroides limpidus (Mexican scorpion) protein is Beta-toxin Cll1m.